Here is a 150-residue protein sequence, read N- to C-terminus: MGKPYFRGQSIHRLDAKGRLRIPTKFREVLQNHYTDALVITRMGECLLAYPPEEWEKIENKAREFSQVQPEHRAFMRYFISSAEECEFDNQGRILIPPFLREEANLTQDVLLAGVLTNFEIWNKSTWDAHIKLDKDSYQKIMEFMAGTGL.

2 consecutive SpoVT-AbrB domains span residues 9-54 (QSIH…PPEE) and 83-126 (AEEC…NKST).

This sequence belongs to the MraZ family. Forms oligomers.

It is found in the cytoplasm. The protein resides in the nucleoid. The protein is Transcriptional regulator MraZ of Syntrophobacter fumaroxidans (strain DSM 10017 / MPOB).